A 359-amino-acid polypeptide reads, in one-letter code: DNA replication and repair protein RecF (359 aa).

30 to 37 contributes to the ATP binding site; the sequence is GPNGSGKT.

This sequence belongs to the RecF family.

The protein localises to the cytoplasm. Its function is as follows. The RecF protein is involved in DNA metabolism; it is required for DNA replication and normal SOS inducibility. RecF binds preferentially to single-stranded, linear DNA. It also seems to bind ATP. The chain is DNA replication and repair protein RecF from Vibrio vulnificus (strain CMCP6).